Reading from the N-terminus, the 478-residue chain is Sugar transporter ERD6-like 18 (478 aa).

12 helical membrane-spanning segments follow: residues 31-51, 71-91, 110-130, 133-153, 162-180, 188-208, 270-290, 306-326, 333-353, 367-387, 407-427, and 433-453; these read ITAC…SFGV, IAQF…GALF, LLCI…WLNF, ISSG…IAEI, FTFT…VYFS, ILAL…FFVP, TLVV…SAVL, IGST…VILV, PLLL…GVAF, VFTF…LGGL, IVTL…NFLL, and GTFY…WLLV.

The protein belongs to the major facilitator superfamily. Sugar transporter (TC 2.A.1.1) family. As to expression, expressed in leaf vasculature, stem and flowers.

It is found in the membrane. In terms of biological role, sugar transporter. This is Sugar transporter ERD6-like 18 (SFP2) from Arabidopsis thaliana (Mouse-ear cress).